The sequence spans 381 residues: Cytochrome b (381 aa).

4 helical membrane passes run 36-56, 80-101, 116-136, and 181-201; these read FGSL…FLTM, WLIR…YIHI, WMVG…GYVL, and FYTF…IHLL. Heme b is bound by residues histidine 86 and histidine 100. Residues histidine 185 and histidine 199 each contribute to the heme b site. Position 204 (histidine 204) interacts with a ubiquinone. The next 4 membrane-spanning stretches (helical) occupy residues 229-249, 291-311, 323-343, and 350-370; these read FKDM…TLTN, LGGV…PLTF, MNQI…WIGA, and YVFV…INPM.

It belongs to the cytochrome b family. In terms of assembly, the main subunits of complex b-c1 are: cytochrome b, cytochrome c1 and the Rieske protein. Requires heme b as cofactor.

Its subcellular location is the mitochondrion inner membrane. In terms of biological role, component of the ubiquinol-cytochrome c reductase complex (complex III or cytochrome b-c1 complex) that is part of the mitochondrial respiratory chain. The b-c1 complex mediates electron transfer from ubiquinol to cytochrome c. Contributes to the generation of a proton gradient across the mitochondrial membrane that is then used for ATP synthesis. This is Cytochrome b (MT-CYB) from Ostrinia nubilalis (European corn borer).